Consider the following 200-residue polypeptide: HTH-type transcriptional regulator Hpr (200 aa).

Residues 13-157 form the HTH marR-type domain; it reads AMLFSQRIAQ…MMCIVRNIYG (145 aa). A DNA-binding region (H-T-H motif) is located at residues 63–86; the sequence is ISEIAKFGVMHVSTAFNFSKKLEE.

In terms of assembly, homodimer.

Negative regulator of protease production and sporulation. The protein is HTH-type transcriptional regulator Hpr of Geobacillus thermodenitrificans (strain NG80-2).